Reading from the N-terminus, the 690-residue chain is MAKKKSEEQSSADANDSDYQEEPNFEDPPGFVDNISDEDLLGDMLAQRPSEADGVESVVVVDNIPKVEPVRLEKLKSVINKLFSNYGDIVNVVYPVDEEGKTKGYAFMEYKQASQAEEAVKKLNNHRLDKNHTFAVNLFTDFQKYENIPEKWEPPTVQTFKVQSDLYNFINDPDTYDQYCVAAETAPNCVQVGFWQNVLPEPFELETRERFTDTFVKWSPLGTYVVTFHKPGVAIWGGSSFQKIQKFPHPGTQFVEFSPCENYLVTYGPTPTGQKIIIWDIRTGAEKRSFVADGMSVLSMFRWSHDDKFVARMGENSIHIYETPSFYLLDLKSIKIPGIRGFSWSPTDNVIAYWVEEQNQIPARVTLMEIPKKREIRNKNLFHVADCKLHWQKSGDYLCVKVDRYSKLKKDKKDLDVKFLGMFYNFEIFHMREKEIPVDSVEIRELILAFAWEPIGNKFSIIHGETNSSNVSFYEVNKGVKPSLVKRLEKKSCTHLFWSPRGQFIVMANLTMGTFEFVDSTNDYIITSSPDHFRASEVEWDPTGRYVVTGVSSWKVKEDTGFNMYTFQGRIIKRTILKNFVQFLWRPRPPTLLSEEKQKEIKKNLKKYYAAFEQKDRLRLTRASKELLEKRSQLRETFMEYRNKRIAEWADQKSRRIMLRGHVDTDNLETDEVDEEIVEFLVKEEVTLLE.

The disordered stretch occupies residues 1–37; it reads MAKKKSEEQSSADANDSDYQEEPNFEDPPGFVDNISD. Over residues 15–25 the composition is skewed to acidic residues; the sequence is NDSDYQEEPNF. In terms of domain architecture, RRM spans 57–141; the sequence is SVVVVDNIPK…HTFAVNLFTD (85 aa). WD repeat units lie at residues 207-246, 293-331, 334-369, 442-484, and 530-575; these read TRERFTDTFVKWSPLGTYVVTFHKPGVAIWGGSSFQKIQK, DGMSVLSMFRWSHDDKFVARMGENSIHIYETPSFYLLDL, IKIPGIRGFSWSPTDNVIAYWVEEQNQIPARVTLME, EIRE…KPSL, and PDHF…IKRT. Residues 595–645 adopt a coiled-coil conformation; that stretch reads EEKQKEIKKNLKKYYAAFEQKDRLRLTRASKELLEKRSQLRETFMEYRNKR.

This sequence belongs to the eIF-3 subunit B family. In terms of assembly, component of the eukaryotic translation initiation factor 3 (eIF-3) complex. The eIF-3 complex interacts with pix. Interacts with mxt.

It localises to the cytoplasm. RNA-binding component of the eukaryotic translation initiation factor 3 (eIF-3) complex, which is involved in protein synthesis of a specialized repertoire of mRNAs and, together with other initiation factors, stimulates binding of mRNA and methionyl-tRNAi to the 40S ribosome. The eIF-3 complex specifically targets and initiates translation of a subset of mRNAs involved in cell proliferation. The protein is Eukaryotic translation initiation factor 3 subunit B of Drosophila sechellia (Fruit fly).